A 542-amino-acid chain; its full sequence is GATA-type transcription factor sreA (542 aa).

A compositionally biased stretch (polar residues) spans 1-10; the sequence is MLTLRSSSDT. The segment at 1–172 is disordered; that stretch reads MLTLRSSSDT…SAQNASGCGS (172 aa). The span at 44-63 shows a compositional bias: basic and acidic residues; the sequence is ADLRPDSFDASRSPDGDKAS. Composition is skewed to low complexity over residues 75-117 and 148-168; these read SSDQ…PKAS and SSTS…QNAS. The tract at residues 178–196 is cystein-rich region (CRR); sequence CPGGGSCNGTGGAVGCDGC. Positions 210 to 223 are enriched in low complexity; sequence APSARQARASPSAQ. A disordered region spans residues 210-248; that stretch reads APSARQARASPSAQTSEEQAQSGLDALDSASQDASGMPK. A GATA-type zinc finger spans residues 250-274; sequence CQNCGTTLTPLWRRDDQGNTICNAC. Residues 289–300 are compositionally biased toward basic residues; it reads MKKTVIKRRKRV. 2 disordered regions span residues 289 to 408 and 461 to 525; these read MKKT…PATR and SNAP…REAE. Composition is skewed to polar residues over residues 311 to 320 and 369 to 387; these read AGSSDNSSVS and KPTQ…NHSP. Residues 396–407 are compositionally biased toward low complexity; it reads ESTSAESAPPAT. The span at 464–483 shows a compositional bias: polar residues; it reads PARSQTQTQPQPGTRSYSPN. Residues 510 to 542 are a coiled coil; that stretch reads DKVKAARRAQLQREAENMREALRAKERELASLK.

Its subcellular location is the nucleus. Its function is as follows. GATA-type transcription repressor that regulates iron acquisition genes through specific binding the GATA sequence elements of target promoters. SreA targets include genes encoding a number of key iron-regulated factors such as the siderophore biosynthesis genes. Is dispensable for growth on keratin substrates. SreA represses the expression of hapX and the siderophore system during iron sufficient conditions by an iron-sensing mechanism, while hapX represses sreA and activates the siderophore system during iron-limiting conditions resulting in efficient iron uptake and inhibition of iron-consuming pathways. This is GATA-type transcription factor sreA from Arthroderma benhamiae (strain ATCC MYA-4681 / CBS 112371) (Trichophyton mentagrophytes).